The chain runs to 134 residues: Small ribosomal subunit protein uS12 (134 aa).

3-methylthioaspartic acid is present on aspartate 89. The disordered stretch occupies residues 103 to 134 (DTAGVKDRKQGRSKYGAKRPKPGEAAATGKKK). Positions 113–122 (GRSKYGAKRP) are enriched in basic residues.

The protein belongs to the universal ribosomal protein uS12 family. In terms of assembly, part of the 30S ribosomal subunit. Contacts proteins S8 and S17. May interact with IF1 in the 30S initiation complex.

In terms of biological role, with S4 and S5 plays an important role in translational accuracy. Functionally, interacts with and stabilizes bases of the 16S rRNA that are involved in tRNA selection in the A site and with the mRNA backbone. Located at the interface of the 30S and 50S subunits, it traverses the body of the 30S subunit contacting proteins on the other side and probably holding the rRNA structure together. The combined cluster of proteins S8, S12 and S17 appears to hold together the shoulder and platform of the 30S subunit. This chain is Small ribosomal subunit protein uS12, found in Thermosynechococcus vestitus (strain NIES-2133 / IAM M-273 / BP-1).